The following is a 773-amino-acid chain: Polyribonucleotide nucleotidyltransferase (773 aa).

Asp490 and Asp496 together coordinate Mg(2+). A KH domain is found at 557–616; that stretch reads PKIDTITIPVDKIKVVIGKGGEQIDKIIAETGVKIDIDDEGLCSIFSSDQAAIDRAKEII. The 69-residue stretch at 626-694 folds into the S1 motif domain; the sequence is GEIYDAKVVR…DKGRVDASMR (69 aa). The span at 700–721 shows a compositional bias: basic and acidic residues; it reads PEGYVEPERKPRERRENGDRRK. Residues 700–773 form a disordered region; that stretch reads PEGYVEPERK…FPELSTKKPE (74 aa). Residues 739 to 748 show a composition bias toward low complexity; the sequence is RNNQGNKVGN. Positions 751 to 773 are enriched in basic and acidic residues; that stretch reads FELRERKSHIDEEFPELSTKKPE.

Belongs to the polyribonucleotide nucleotidyltransferase family. Requires Mg(2+) as cofactor.

It is found in the cytoplasm. It catalyses the reaction RNA(n+1) + phosphate = RNA(n) + a ribonucleoside 5'-diphosphate. Functionally, involved in mRNA degradation. Catalyzes the phosphorolysis of single-stranded polyribonucleotides processively in the 3'- to 5'-direction. In Lactococcus lactis subsp. lactis (strain IL1403) (Streptococcus lactis), this protein is Polyribonucleotide nucleotidyltransferase.